The primary structure comprises 435 residues: Rho GTPase-activating protein 4 (435 aa).

A disordered region spans residues 1 to 59; sequence MAKVLKSSQSCHFPSPSSSSSTSCGGGNDGSNRDPHSPFNISRREEEEEEEERSEKERE. The segment covering 7–23 has biased composition (low complexity); that stretch reads SSQSCHFPSPSSSSSTS. Residues 93–106 form the CRIB domain; sequence IGVPTDVRHVAHVT. The Rho-GAP domain occupies 138–319; it reads VSTESMQLSY…LIVKTLKDRK (182 aa). The disordered stretch occupies residues 321–343; it reads SRDKLVPASNPSPRDHNGDQSSS.

In terms of biological role, acts as a GTPase activator for the Rac-type GTPase by converting it to an inactive GDP-bound state. Acts as a negative feedback regulator in tolerance to oxygen deprivation which requires ARAC4/ROP2. This Arabidopsis thaliana (Mouse-ear cress) protein is Rho GTPase-activating protein 4 (ROPGAP4).